A 710-amino-acid chain; its full sequence is METRESEDLEKTRRKSASDQWNTDNEPAKVKPELLPEKEETSQADQDIQDKEPHCHIPIKRNSIFNRSIRRKSKAKARDNPERNASCLADSQDNGKSVNEPLTLNIPWSRMPPCRTAMQTDPGAQEMSESSSTPGNGATPEEWPALADSPTTLTEALRMIHPIPADSWRNLIEQIGLLYQEYRDKSTLQEIETRRQQDAEIEDNTNGSPASEDTPEEEEEEEEEEEPASPPERKTLPQICLLSNPHSRFNLWQDLPEIRSSGVLEILQPEEIKLQEAMFELVTSEASYYKSLNLLVSHFMENERIRKILHPSEAHILFSNVLDVLAVSERFLLELEHRMEENIVISDVCDIVYRYAADHFSVYITYVSNQTYQERTYKQLLQEKAAFRELIAQLELDPKCRGLPFSSFLILPFQRITRLKLLVQNILKRVEERSERECTALDAHKELEMVVKACNEGVRKMSRTEQMISIQKKMEFKIKSVPIISHSRWLLKQGELQQMSGPKTSRTLRTKKLFHEIYLFLFNDLLVICRQIPGDKYQVFDSAPRGLLRVEELEDQGQTLANVFILRLLENADDREATYMLKASSQSEMKRWMTSLAPNRRTKFVSFTSRLLDCPQVQCVHPYVAQQPDELTLELADILNILDKTDDGWIFGERLHDQERGWFPSSMTEEILNPKIRSQNLKECFRVHKMDDPQRSQNKDRRKLGSRNRQ.

Basic and acidic residues-rich tracts occupy residues Met1 to Lys11 and Glu26 to Thr41. Residues Met1–Trp143 are disordered. Residues Met1–Lys273 are regulatory region; modulates activity toward RHOA, RAC1 and CDC42. Polar residues-rich tracts occupy residues Ala89–Leu102 and Met127–Asn136. Residue Tyr179 is modified to Phosphotyrosine. The interval Arg194–Leu236 is disordered. A compositionally biased stretch (acidic residues) spans Asp213–Pro227. A DH domain is found at Lys273–Gly457. Residues Trp489 to Arg601 enclose the PH domain. Positions Leu612–Asn673 constitute an SH3 domain. Over residues Val687 to Lys699 the composition is skewed to basic and acidic residues. Positions Val687 to Gln710 are disordered. Residues Asp700–Gln710 are compositionally biased toward basic residues.

As to quaternary structure, interacts with CDK5R1 and EPHA4; activated by EPHA4 through the CDK5 kinase. Post-translationally, src-dependent phosphorylation at Tyr-179 upon EPHA4 activation increases the guanine exchange factor activity toward RHOA. Phosphorylation by CDK5 upon EPHA4 activation by EFNA1 may regulate dendritic spine morphogenesis. Highly expressed in brain specifically in caudate nucleus and to a lower extent in amygdala and hippocampus. Also detected in lung.

Its subcellular location is the cytoplasm. The protein resides in the membrane. It is found in the cell projection. It localises to the growth cone. Its function is as follows. Acts as a guanine nucleotide exchange factor (GEF) which differentially activates the GTPases RHOA, RAC1 and CDC42. Plays a role in axon guidance regulating ephrin-induced growth cone collapse and dendritic spine morphogenesis. Upon activation by ephrin through EPHA4, the GEF activity switches toward RHOA resulting in its activation. Activated RHOA promotes cone retraction at the expense of RAC1- and CDC42-stimulated growth cone extension. The polypeptide is Ephexin-1 (NGEF) (Homo sapiens (Human)).